We begin with the raw amino-acid sequence, 215 residues long: Ribosomal RNA small subunit methyltransferase G (215 aa).

S-adenosyl-L-methionine contacts are provided by residues Gly-78, Leu-83, 128–129 (AE), and Arg-146.

Belongs to the methyltransferase superfamily. RNA methyltransferase RsmG family.

It localises to the cytoplasm. It catalyses the reaction guanosine(527) in 16S rRNA + S-adenosyl-L-methionine = N(7)-methylguanosine(527) in 16S rRNA + S-adenosyl-L-homocysteine. In terms of biological role, specifically methylates the N7 position of guanine in position 527 of 16S rRNA. In Anaeromyxobacter sp. (strain Fw109-5), this protein is Ribosomal RNA small subunit methyltransferase G.